A 603-amino-acid polypeptide reads, in one-letter code: Pyruvate oxidase (603 aa).

The segment at 1-191 is core; the sequence is MVMKQTKQTN…WYASANSYQT (191 aa). The FAD-binding stretch occupies residues 192–342; the sequence is PLLPEPDVQA…ILAQVSERES (151 aa). Residues 343–603 form a thiamine pyrophosphate binding region; sequence TPWWQANLAN…LQHQIGQGGF (261 aa). 3 residues coordinate Mg(2+): aspartate 447, asparagine 474, and glutamine 476.

This sequence belongs to the TPP enzyme family. Homotetramer. FAD serves as cofactor. Requires Mg(2+) as cofactor. Thiamine diphosphate is required as a cofactor.

It catalyses the reaction pyruvate + phosphate + O2 + H(+) = acetyl phosphate + H2O2 + CO2. Functionally, important for the aerobic growth. Decarboxylates pyruvate in four steps. The energy released is partially stored in acetyl phosphate. This chain is Pyruvate oxidase (pox5), found in Lactiplantibacillus plantarum (strain ATCC BAA-793 / NCIMB 8826 / WCFS1) (Lactobacillus plantarum).